Reading from the N-terminus, the 383-residue chain is MCRSVSNMLDRISGLSKDASPNSTTTIQEIITLEKCLTSKVSALFLICKMLKIPACPVCDVPCRIEPHFGGIACAACAAFFRRTVSLNIGYMCKREKLCRKARKSCRACRFERCVKSAGLQRDYVRQLLTPRNTPLYILNRQDNTGGEIVRAFASPTMPKPEPTPQLGFSDILKVSNSSLFKFYLNQVEKAVKLRQKNTLTIKTNAELLKIVATQQELALEACRTCPGMDLLDKEDRKVVQKYFVFSNVWIESTWLYSLAKEHLETENNLNFDINLKKFIEQVKSTLLFSFSQFKLNIFELAAFKAICIWKLIYHETSRAMKIIAQEHYDGVASALRNYYETHTSMDHSEIAIRIGEITLLVVSIFQLYHDMAKLYVQIGIPF.

A DNA-binding region (nuclear receptor) is located at residues 53-127; sequence IPACPVCDVP…AGLQRDYVRQ (75 aa). 2 NR C4-type zinc fingers span residues 56 to 77 and 93 to 109; these read CPVCDVPCRIEPHFGGIACAAC and CKREKLCRKARKSCRAC. The 212-residue stretch at 172 to 383 folds into the NR LBD domain; that stretch reads ILKVSNSSLF…KLYVQIGIPF (212 aa).

The protein belongs to the nuclear hormone receptor family.

Its subcellular location is the nucleus. Its function is as follows. Orphan nuclear receptor. This is Nuclear hormone receptor family member nhr-217 (nhr-217) from Caenorhabditis elegans.